The following is a 129-amino-acid chain: Fluoride-specific ion channel FluC (129 aa).

Helical transmembrane passes span 10-30 (LLVG…ALAF), 35-55 (PGFP…IGFL), 71-91 (LFLV…MFEG), and 105-125 (LYLA…IIAA). Residues Gly-79 and Thr-82 each contribute to the Na(+) site.

This sequence belongs to the fluoride channel Fluc/FEX (TC 1.A.43) family.

The protein resides in the cell inner membrane. It catalyses the reaction fluoride(in) = fluoride(out). With respect to regulation, na(+) is not transported, but it plays an essential structural role and its presence is essential for fluoride channel function. In terms of biological role, fluoride-specific ion channel. Important for reducing fluoride concentration in the cell, thus reducing its toxicity. The sequence is that of Fluoride-specific ion channel FluC from Chlorobium luteolum (strain DSM 273 / BCRC 81028 / 2530) (Pelodictyon luteolum).